A 513-amino-acid chain; its full sequence is NAD(P)H-quinone oxidoreductase subunit 2 (513 aa).

A run of 14 helical transmembrane segments spans residues 12-32, 41-61, 77-97, 104-124, 130-150, 165-185, 199-219, 238-258, 272-292, 300-320, 328-348, 372-392, 394-414, and 456-476; these read TLWP…VDLI, LPYL…PMWI, LSVV…LMSV, SLAT…AMLL, MAMI…LSGY, LLIG…LYGF, IVNL…GICF, PTPV…ALAI, WQTL…VVAI, MLAY…AIGT, ILYI…VVLF, LVLS…GFFG, LYLF…FGLV, and AGML…PPLI. Residues 494 to 505 are compositionally biased toward polar residues; that stretch reads TATPVSRVSTGA. A disordered region spans residues 494–513; sequence TATPVSRVSTGAQAPADHGR.

Belongs to the complex I subunit 2 family. In terms of assembly, NDH-1 can be composed of about 15 different subunits; different subcomplexes with different compositions have been identified which probably have different functions.

The protein localises to the cell inner membrane. It catalyses the reaction a plastoquinone + NADH + (n+1) H(+)(in) = a plastoquinol + NAD(+) + n H(+)(out). The catalysed reaction is a plastoquinone + NADPH + (n+1) H(+)(in) = a plastoquinol + NADP(+) + n H(+)(out). Its function is as follows. NDH-1 shuttles electrons from an unknown electron donor, via FMN and iron-sulfur (Fe-S) centers, to quinones in the respiratory and/or the photosynthetic chain. The immediate electron acceptor for the enzyme in this species is believed to be plastoquinone. Couples the redox reaction to proton translocation, and thus conserves the redox energy in a proton gradient. Cyanobacterial NDH-1 also plays a role in inorganic carbon-concentration. The protein is NAD(P)H-quinone oxidoreductase subunit 2 of Gloeobacter violaceus (strain ATCC 29082 / PCC 7421).